The following is a 123-amino-acid chain: Small ribosomal subunit protein uS12 (123 aa).

Asp-89 bears the 3-methylthioaspartic acid mark. The segment at 104 to 123 (TAGVKDRKQARSKYGAKRPK) is disordered. The segment covering 113–123 (ARSKYGAKRPK) has biased composition (basic residues).

The protein belongs to the universal ribosomal protein uS12 family. In terms of assembly, part of the 30S ribosomal subunit. Contacts proteins S8 and S17. May interact with IF1 in the 30S initiation complex.

Functionally, with S4 and S5 plays an important role in translational accuracy. In terms of biological role, interacts with and stabilizes bases of the 16S rRNA that are involved in tRNA selection in the A site and with the mRNA backbone. Located at the interface of the 30S and 50S subunits, it traverses the body of the 30S subunit contacting proteins on the other side and probably holding the rRNA structure together. The combined cluster of proteins S8, S12 and S17 appears to hold together the shoulder and platform of the 30S subunit. The protein is Small ribosomal subunit protein uS12 of Chromobacterium violaceum (strain ATCC 12472 / DSM 30191 / JCM 1249 / CCUG 213 / NBRC 12614 / NCIMB 9131 / NCTC 9757 / MK).